The sequence spans 182 residues: ATP synthase subunit delta (182 aa).

Belongs to the ATPase delta chain family. As to quaternary structure, F-type ATPases have 2 components, F(1) - the catalytic core - and F(0) - the membrane proton channel. F(1) has five subunits: alpha(3), beta(3), gamma(1), delta(1), epsilon(1). F(0) has three main subunits: a(1), b(2) and c(10-14). The alpha and beta chains form an alternating ring which encloses part of the gamma chain. F(1) is attached to F(0) by a central stalk formed by the gamma and epsilon chains, while a peripheral stalk is formed by the delta and b chains.

It is found in the cell membrane. F(1)F(0) ATP synthase produces ATP from ADP in the presence of a proton or sodium gradient. F-type ATPases consist of two structural domains, F(1) containing the extramembraneous catalytic core and F(0) containing the membrane proton channel, linked together by a central stalk and a peripheral stalk. During catalysis, ATP synthesis in the catalytic domain of F(1) is coupled via a rotary mechanism of the central stalk subunits to proton translocation. Its function is as follows. This protein is part of the stalk that links CF(0) to CF(1). It either transmits conformational changes from CF(0) to CF(1) or is implicated in proton conduction. This is ATP synthase subunit delta from Lachnoclostridium phytofermentans (strain ATCC 700394 / DSM 18823 / ISDg) (Clostridium phytofermentans).